Reading from the N-terminus, the 475-residue chain is Ribulose bisphosphate carboxylase large chain (475 aa).

Residues Met-1–Ser-2 constitute a propeptide that is removed on maturation. Position 3 is an N-acetylproline (Pro-3). N6,N6,N6-trimethyllysine is present on Lys-14. Positions 123 and 173 each coordinate substrate. Lys-175 acts as the Proton acceptor in catalysis. Lys-177 contributes to the substrate binding site. Mg(2+) contacts are provided by Lys-201, Asp-203, and Glu-204. At Lys-201 the chain carries N6-carboxylysine. His-294 functions as the Proton acceptor in the catalytic mechanism. Substrate-binding residues include Arg-295, His-327, and Ser-379.

Belongs to the RuBisCO large chain family. Type I subfamily. Heterohexadecamer of 8 large chains and 8 small chains; disulfide-linked. The disulfide link is formed within the large subunit homodimers. Requires Mg(2+) as cofactor. Post-translationally, the disulfide bond which can form in the large chain dimeric partners within the hexadecamer appears to be associated with oxidative stress and protein turnover.

It is found in the plastid. It localises to the chloroplast. It catalyses the reaction 2 (2R)-3-phosphoglycerate + 2 H(+) = D-ribulose 1,5-bisphosphate + CO2 + H2O. The catalysed reaction is D-ribulose 1,5-bisphosphate + O2 = 2-phosphoglycolate + (2R)-3-phosphoglycerate + 2 H(+). Functionally, ruBisCO catalyzes two reactions: the carboxylation of D-ribulose 1,5-bisphosphate, the primary event in carbon dioxide fixation, as well as the oxidative fragmentation of the pentose substrate in the photorespiration process. Both reactions occur simultaneously and in competition at the same active site. In Gossypium hirsutum (Upland cotton), this protein is Ribulose bisphosphate carboxylase large chain.